A 229-amino-acid polypeptide reads, in one-letter code: Heptaprenylglyceryl phosphate synthase (229 aa).

Position 12 (K12) interacts with sn-glycerol 1-phosphate. The Mg(2+) site is built by D14 and S40. Residues Y159–G164, G189, and G209–N210 contribute to the sn-glycerol 1-phosphate site.

The protein belongs to the GGGP/HepGP synthase family. Group I subfamily. In terms of assembly, homodimer. It depends on Mg(2+) as a cofactor.

The enzyme catalyses sn-glycerol 1-phosphate + all-trans-heptaprenyl diphosphate = 3-heptaprenyl-sn-glycero-1-phosphate + diphosphate. It functions in the pathway membrane lipid metabolism; glycerophospholipid metabolism. Functionally, prenyltransferase that catalyzes in vivo the transfer of the heptaprenyl moiety of heptaprenyl pyrophosphate (HepPP; 35 carbon atoms) to the C3 hydroxyl of sn-glycerol-1-phosphate (G1P), producing heptaprenylglyceryl phosphate (HepGP). This reaction is an ether-bond-formation step in the biosynthesis of archaea-type G1P-based membrane lipids found in Bacillales. This chain is Heptaprenylglyceryl phosphate synthase, found in Bacillus cytotoxicus (strain DSM 22905 / CIP 110041 / 391-98 / NVH 391-98).